The following is a 587-amino-acid chain: Monocopper oxidase-like protein SKU5 (587 aa).

Residues 1–20 (MDLFKILLLVFFVNISFCFA) form the signal peptide. N-linked (GlcNAc...) asparagine glycans are attached at residues asparagine 14 and asparagine 58. Position 80 (histidine 80) interacts with Cu cation. Asparagine 107, asparagine 169, asparagine 200, asparagine 257, asparagine 278, asparagine 293, asparagine 342, asparagine 362, asparagine 430, and asparagine 444 each carry an N-linked (GlcNAc...) asparagine glycan. Histidine 452 contributes to the Cu cation binding site. An N-linked (GlcNAc...) asparagine glycan is attached at asparagine 534. A lipid anchor (GPI-anchor amidated serine) is attached at serine 562. A propeptide spans 563–587 (ASKSIGFTSLSMVVMALVMMMMLQH) (removed in mature form).

Belongs to the multicopper oxidase family. Requires Cu cation as cofactor. Expressed in roots, hypocotyls, cotyledons, leaves, stems and flowers.

It is found in the secreted. The protein resides in the cell wall. The protein localises to the cell membrane. May be a monocopper oxidase of unknown specificity. Involved in directional growth processes, possibly by participating in cell wall expansion. In Arabidopsis thaliana (Mouse-ear cress), this protein is Monocopper oxidase-like protein SKU5 (SKU5).